We begin with the raw amino-acid sequence, 263 residues long: Neurogenin-2 (263 aa).

Residues 20 to 76 (LGSASPASATLTPMSSSADEEEDEELRRPGSARGQRGAEAEQGVQGSPASGAGGCRP) are disordered. Over residues 24–36 (SPASATLTPMSSS) the composition is skewed to polar residues. One can recognise a bHLH domain in the interval 112-164 (TRRLKANNRERNRMHNLNAALDALREVLPTFPEDAKLTKIETLRFAHNYIWAL). Residues 197–231 (LGASGDSPSPPSSWSCTNSPASSSNSTSPYSCTLS) are compositionally biased toward low complexity. Positions 197-253 (LGASGDSPSPPSSWSCTNSPASSSNSTSPYSCTLSPASPGSDVDYWQPPPPEKHRYA) are disordered.

In terms of assembly, efficient DNA binding requires dimerization with another bHLH protein.

The protein localises to the nucleus. Transcriptional regulator. Involved in neuronal differentiation. Activates transcription by binding to the E box (5'-CANNTG-3'). The chain is Neurogenin-2 (Neurog2) from Mus musculus (Mouse).